The sequence spans 312 residues: Aspartate carbamoyltransferase catalytic subunit (312 aa).

The carbamoyl phosphate site is built by Arg55 and Thr56. Residue Lys83 coordinates L-aspartate. Residues Arg105, His133, and Gln136 each coordinate carbamoyl phosphate. Residues Arg166 and Arg220 each contribute to the L-aspartate site. 2 residues coordinate carbamoyl phosphate: Gly261 and Pro262.

The protein belongs to the aspartate/ornithine carbamoyltransferase superfamily. ATCase family. In terms of assembly, heterododecamer (2C3:3R2) of six catalytic PyrB chains organized as two trimers (C3), and six regulatory PyrI chains organized as three dimers (R2).

It catalyses the reaction carbamoyl phosphate + L-aspartate = N-carbamoyl-L-aspartate + phosphate + H(+). The protein operates within pyrimidine metabolism; UMP biosynthesis via de novo pathway; (S)-dihydroorotate from bicarbonate: step 2/3. Its function is as follows. Catalyzes the condensation of carbamoyl phosphate and aspartate to form carbamoyl aspartate and inorganic phosphate, the committed step in the de novo pyrimidine nucleotide biosynthesis pathway. The sequence is that of Aspartate carbamoyltransferase catalytic subunit from Prosthecochloris aestuarii (strain DSM 271 / SK 413).